Consider the following 114-residue polypeptide: UPF0342 protein SE_1526 (114 aa).

Belongs to the UPF0342 family.

This is UPF0342 protein SE_1526 from Staphylococcus epidermidis (strain ATCC 12228 / FDA PCI 1200).